Consider the following 592-residue polypeptide: Aspartate--tRNA ligase (592 aa).

E180 serves as a coordination point for L-aspartate. The segment at 204–207 is aspartate; sequence QLFK. R226 contributes to the L-aspartate binding site. Residues 226–228 and Q235 each bind ATP; that span reads RDE. L-aspartate is bound at residue H455. An ATP-binding site is contributed by E489. An L-aspartate-binding site is contributed by R496. An ATP-binding site is contributed by 541-544; the sequence is GFDR.

It belongs to the class-II aminoacyl-tRNA synthetase family. Type 1 subfamily. Homodimer.

It localises to the cytoplasm. It carries out the reaction tRNA(Asp) + L-aspartate + ATP = L-aspartyl-tRNA(Asp) + AMP + diphosphate. Catalyzes the attachment of L-aspartate to tRNA(Asp) in a two-step reaction: L-aspartate is first activated by ATP to form Asp-AMP and then transferred to the acceptor end of tRNA(Asp). In Clostridium tetani (strain Massachusetts / E88), this protein is Aspartate--tRNA ligase.